Here is a 185-residue protein sequence, read N- to C-terminus: Threonylcarbamoyl-AMP synthase (185 aa).

One can recognise a YrdC-like domain in the interval Ser-4–Gly-185.

This sequence belongs to the SUA5 family. TsaC subfamily.

The protein resides in the cytoplasm. It catalyses the reaction L-threonine + hydrogencarbonate + ATP = L-threonylcarbamoyladenylate + diphosphate + H2O. Required for the formation of a threonylcarbamoyl group on adenosine at position 37 (t(6)A37) in tRNAs that read codons beginning with adenine. Catalyzes the conversion of L-threonine, HCO(3)(-)/CO(2) and ATP to give threonylcarbamoyl-AMP (TC-AMP) as the acyladenylate intermediate, with the release of diphosphate. This Pseudomonas putida (strain ATCC 47054 / DSM 6125 / CFBP 8728 / NCIMB 11950 / KT2440) protein is Threonylcarbamoyl-AMP synthase.